Reading from the N-terminus, the 358-residue chain is Guanidino acid hydrolase, mitochondrial (358 aa).

Residues 1–36 constitute a mitochondrion transit peptide; it reads MLRLLRSSWARGLGSGVATWRPSAGLFRPGCPGIRQ. The segment at 31–56 is disordered; sequence CPGIRQASGASDTPHHQSPSSESPVQ. Residues 46–56 are compositionally biased toward low complexity; that stretch reads HQSPSSESPVQ. Mn(2+) contacts are provided by Q168 and H193. Residue K199 is modified to N6-acetyllysine. An N6-acetyllysine; alternate modification is found at K223. K223 carries the N6-succinyllysine; alternate modification. D284 is a binding site for Mn(2+).

The protein belongs to the arginase family. Agmatinase subfamily. Mn(2+) is required as a cofactor. As to expression, detected only in liver.

The protein resides in the mitochondrion. It catalyses the reaction 3-guanidinopropanoate + H2O = urea + beta-alanine. The enzyme catalyses 4-guanidinobutanoate + H2O = urea + 4-aminobutanoate. The catalysed reaction is taurocyamine + H2O = urea + taurine. It carries out the reaction L-arginine + H2O = urea + L-ornithine. The protein operates within nitrogen metabolism; urea cycle; L-ornithine and urea from L-arginine: step 1/1. Its function is as follows. Hydrolyzes linear guanidino acids to form urea and the corresponding amines. Displays specificity for substrates having a negatively charged head group and short chains including taurocyamine, guanidino propanoic and butanoic acids. May protect cells by detoxifying potentially harmful amounts of guanidino acids. Metabolizes L-arginine with low efficiency. The sequence is that of Guanidino acid hydrolase, mitochondrial (Agmat) from Mus musculus (Mouse).